An 80-amino-acid polypeptide reads, in one-letter code: Acyl carrier protein (80 aa).

The Carrier domain occupies 1–79; that stretch reads MTEEEIFNKI…EAVEYIKSHQ (79 aa). At Ser-39 the chain carries O-(pantetheine 4'-phosphoryl)serine.

This sequence belongs to the acyl carrier protein (ACP) family. Post-translationally, 4'-phosphopantetheine is transferred from CoA to a specific serine of apo-ACP by AcpS. This modification is essential for activity because fatty acids are bound in thioester linkage to the sulfhydryl of the prosthetic group.

It localises to the cytoplasm. Its pathway is lipid metabolism; fatty acid biosynthesis. In terms of biological role, carrier of the growing fatty acid chain in fatty acid biosynthesis. The protein is Acyl carrier protein of Lactobacillus johnsonii (strain CNCM I-12250 / La1 / NCC 533).